The primary structure comprises 348 residues: 3-isopropylmalate dehydrogenase (348 aa).

76–87 serves as a coordination point for NAD(+); the sequence is GPKWTDPNNRPE. Substrate contacts are provided by R94, R104, R132, and D217. The Mg(2+) site is built by D217, D241, and D245. An NAD(+)-binding site is contributed by 275-287; it reads GSAPDIAGKNVAN.

It belongs to the isocitrate and isopropylmalate dehydrogenases family. LeuB type 1 subfamily. In terms of assembly, homodimer. Requires Mg(2+) as cofactor. Mn(2+) is required as a cofactor.

The protein localises to the cytoplasm. It carries out the reaction (2R,3S)-3-isopropylmalate + NAD(+) = 4-methyl-2-oxopentanoate + CO2 + NADH. Its pathway is amino-acid biosynthesis; L-leucine biosynthesis; L-leucine from 3-methyl-2-oxobutanoate: step 3/4. Functionally, catalyzes the oxidation of 3-carboxy-2-hydroxy-4-methylpentanoate (3-isopropylmalate) to 3-carboxy-4-methyl-2-oxopentanoate. The product decarboxylates to 4-methyl-2 oxopentanoate. This chain is 3-isopropylmalate dehydrogenase, found in Staphylococcus aureus (strain MRSA252).